We begin with the raw amino-acid sequence, 430 residues long: Probable WRKY transcription factor 14 (430 aa).

The WRKY DNA-binding region spans 211-277 (SGEVVPSDLW…YTSEHNHPWP (67 aa)). The tract at residues 283–366 (LAGSTRSSTS…APYRPELHDH (84 aa)) is disordered. The segment covering 286-306 (STRSSTSSSSNPNPSKPSTAN) has biased composition (low complexity). Positions 307 to 319 (VNSSSIGSQNTIY) are enriched in polar residues. The span at 340-354 (GDDMELENVDDDDDN) shows a compositional bias: acidic residues.

It belongs to the WRKY group II-e family.

It is found in the nucleus. Transcription factor. Interacts specifically with the W box (5'-(T)TGAC[CT]-3'), a frequently occurring elicitor-responsive cis-acting element. The sequence is that of Probable WRKY transcription factor 14 (WRKY14) from Arabidopsis thaliana (Mouse-ear cress).